Consider the following 260-residue polypeptide: NH(3)-dependent NAD(+) synthetase (260 aa).

31-38 is an ATP binding site; that stretch reads GLSGGLDS. D37 contacts Mg(2+). Position 112 (R112) interacts with deamido-NAD(+). T132 is a binding site for ATP. A Mg(2+)-binding site is contributed by E137. ATP is bound by residues K161 and S183.

This sequence belongs to the NAD synthetase family. In terms of assembly, homodimer.

The enzyme catalyses deamido-NAD(+) + NH4(+) + ATP = AMP + diphosphate + NAD(+) + H(+). Its pathway is cofactor biosynthesis; NAD(+) biosynthesis; NAD(+) from deamido-NAD(+) (ammonia route): step 1/1. Catalyzes the ATP-dependent amidation of deamido-NAD to form NAD. Uses ammonia as a nitrogen source. The protein is NH(3)-dependent NAD(+) synthetase of Helicobacter pylori (strain J99 / ATCC 700824) (Campylobacter pylori J99).